A 333-amino-acid chain; its full sequence is Ornithine carbamoyltransferase (333 aa).

Residues 56–59 (STRT), Gln-83, Arg-107, and 134–137 (HPTQ) contribute to the carbamoyl phosphate site. L-ornithine-binding positions include Asn-167, Asp-231, and 235–236 (SM). Carbamoyl phosphate is bound by residues 273–274 (CL) and Arg-318.

It belongs to the aspartate/ornithine carbamoyltransferase superfamily. OTCase family.

It is found in the cytoplasm. The enzyme catalyses carbamoyl phosphate + L-ornithine = L-citrulline + phosphate + H(+). It participates in amino-acid biosynthesis; L-arginine biosynthesis; L-arginine from L-ornithine and carbamoyl phosphate: step 1/3. Reversibly catalyzes the transfer of the carbamoyl group from carbamoyl phosphate (CP) to the N(epsilon) atom of ornithine (ORN) to produce L-citrulline. The protein is Ornithine carbamoyltransferase (argF) of Staphylococcus aureus (strain Mu50 / ATCC 700699).